Consider the following 273-residue polypeptide: Putative phosphoenolpyruvate synthase regulatory protein (273 aa).

Residue 153–160 participates in ADP binding; that stretch reads AVSRAGKT.

It belongs to the pyruvate, phosphate/water dikinase regulatory protein family. PSRP subfamily.

It carries out the reaction [pyruvate, water dikinase] + ADP = [pyruvate, water dikinase]-phosphate + AMP + H(+). It catalyses the reaction [pyruvate, water dikinase]-phosphate + phosphate + H(+) = [pyruvate, water dikinase] + diphosphate. Bifunctional serine/threonine kinase and phosphorylase involved in the regulation of the phosphoenolpyruvate synthase (PEPS) by catalyzing its phosphorylation/dephosphorylation. This chain is Putative phosphoenolpyruvate synthase regulatory protein, found in Xanthomonas campestris pv. campestris (strain ATCC 33913 / DSM 3586 / NCPPB 528 / LMG 568 / P 25).